Consider the following 96-residue polypeptide: Protein S100-A10 (96 aa).

The interval Asp62–Ser73 is ancestral calcium site.

Belongs to the S-100 family. Tetramer of 2 light chains (p10) and 2 heavy chains (annexin II).

Functionally, because p10 induces the dimerization of annexin II (p36), it may function as a regulator of protein phosphorylation in that the p36 monomer is the preferred target (in vitro) of tyrosine-specific kinase. The polypeptide is Protein S100-A10 (s100a10) (Xenopus laevis (African clawed frog)).